A 237-amino-acid chain; its full sequence is Phosphoribosylaminoimidazole-succinocarboxamide synthase (237 aa).

This sequence belongs to the SAICAR synthetase family.

It carries out the reaction 5-amino-1-(5-phospho-D-ribosyl)imidazole-4-carboxylate + L-aspartate + ATP = (2S)-2-[5-amino-1-(5-phospho-beta-D-ribosyl)imidazole-4-carboxamido]succinate + ADP + phosphate + 2 H(+). It functions in the pathway purine metabolism; IMP biosynthesis via de novo pathway; 5-amino-1-(5-phospho-D-ribosyl)imidazole-4-carboxamide from 5-amino-1-(5-phospho-D-ribosyl)imidazole-4-carboxylate: step 1/2. In Hamiltonella defensa subsp. Acyrthosiphon pisum (strain 5AT), this protein is Phosphoribosylaminoimidazole-succinocarboxamide synthase.